The following is a 239-amino-acid chain: tRNA (guanine-N(7)-)-methyltransferase (239 aa).

S-adenosyl-L-methionine-binding residues include Glu-69, Glu-94, Asp-121, and Asp-144. The active site involves Asp-144. Lys-148 serves as a coordination point for substrate. The segment at 150–155 is interaction with RNA; it reads RHNKRR. Substrate is bound by residues Asp-180 and 217–220; that span reads TKFE.

The protein belongs to the class I-like SAM-binding methyltransferase superfamily. TrmB family. In terms of assembly, monomer.

The enzyme catalyses guanosine(46) in tRNA + S-adenosyl-L-methionine = N(7)-methylguanosine(46) in tRNA + S-adenosyl-L-homocysteine. The protein operates within tRNA modification; N(7)-methylguanine-tRNA biosynthesis. In terms of biological role, catalyzes the formation of N(7)-methylguanine at position 46 (m7G46) in tRNA. This Salmonella choleraesuis (strain SC-B67) protein is tRNA (guanine-N(7)-)-methyltransferase.